The sequence spans 1680 residues: Sodium channel protein type 7 subunit alpha (1680 aa).

Residues 1-117 (MLTSPEPKGL…RRAVIKVLVH (117 aa)) lie on the Cytoplasmic side of the membrane. The stretch at 100–401 (TLSPLSSLRR…ILTMAYEQEK (302 aa)) is one I repeat. A helical transmembrane segment spans residues 118-137 (PLFRLLILISVLTDSILMCM). At 138 to 141 (SNLP) the chain is on the extracellular side. The chain crosses the membrane as a helical span at residues 142 to 167 (EWILAVENTLLGIYTFEILVKVIARG). At 168–178 (IWAGSFSFLGD) the chain is on the cytoplasmic side. A helical membrane pass occupies residues 179-196 (LWNWLDFSVTLFELITRS). Topologically, residues 197-200 (SPLS) are extracellular. Residues 201 to 219 (SLPMFKTIRTLRILKIIPL) form a helical membrane-spanning segment. Topologically, residues 220 to 237 (NHGLQSIVVTLVQCLKKL) are cytoplasmic. The helical transmembrane segment at 238–259 (LGAIALALFFLTVSSLFGMGLF) threads the bilayer. The Extracellular portion of the chain corresponds to 260 to 338 (MGNLKHKCVR…PDNGFTSFDN (79 aa)). A disulfide bridge connects residues Cys-267 and Cys-307. 2 N-linked (GlcNAc...) asparagine glycosylation sites follow: Asn-281 and Asn-309. An intramembrane region (pore-forming) is located at residues 339–366 (FGWALLAMFRLMTQDYPELLYHQILYAS). Position 367 (Gly-367) is a topological domain, extracellular. The helical transmembrane segment at 368 to 407 (KIYMIFFVLISFWFAFYMASLFLGILTMAYEQEKQRASEE) threads the bilayer. Residues 408–505 (SRDMDSKCHQ…EFADRIITHP (98 aa)) are Cytoplasmic-facing. The II repeat unit spans residues 487–756 (CSPCWIKLNE…QLAVAWIKMV (270 aa)). The helical transmembrane segment at 506-521 (LFDLFLVICIILNICF) threads the bilayer. At 522–530 (LALEHFPMS) the chain is on the extracellular side. Residues 531–559 (EELMSLLAIGNLVFIGIYTIEMILKIIAM) form a helical membrane-spanning segment. Residues 560–568 (HPYGYFQIS) lie on the Cytoplasmic side of the membrane. Residues 569 to 586 (WHIFDSILVVLGLTEMLL) form a helical membrane-spanning segment. Residues 587–592 (ADIEEI) are Extracellular-facing. The chain crosses the membrane as a helical span at residues 593-608 (TVFILVPLIFIKLGKY). The Cytoplasmic portion of the chain corresponds to 609-625 (APPFKNLMRILGRALVA). A helical transmembrane segment spans residues 626 to 654 (LKDLVLLVSIFIYFSAVFGMKLFGRSYKD). Topologically, residues 655 to 672 (CVCHVDQDCQRQRWHMSD) are extracellular. 2 disulfide bridges follow: Cys-657–Cys-663 and Cys-695–Cys-704. An intramembrane region (pore-forming) is located at residues 673–699 (FLHAYVTVFRILCGEWIETLWECMEVA). Gly-700 is a topological domain (extracellular). The helical transmembrane segment at 701–731 (EAWCIPFYMMVILIGNLLILYLFVALVSSFA) threads the bilayer. The Cytoplasmic segment spans residues 732 to 933 (SYDATTEVSK…KTCCKIVENS (202 aa)). Positions 807-833 (DQSSGTEKTPVTESESQSLIASPSVSE) are enriched in polar residues. The tract at residues 807-874 (DQSSGTEKTP…MKQSSSSECS (68 aa)) is disordered. Ser-842 carries the phosphoserine modification. The III repeat unit spans residues 915–1223 (NGKIWRNIRK…KKQYRALKKL (309 aa)). Residues 934 to 952 (WFECFIGLVTLLCTGTLAL) traverse the membrane as a helical segment. At 953–960 (EDIYIDQR) the chain is on the extracellular side. Residues 961–989 (KTIKIFLEYGDMIFAYIFILEMLLKWVAY) form a helical membrane-spanning segment. Residues 990 to 997 (GFKAYFSN) lie on the Cytoplasmic side of the membrane. Residues 998 to 1019 (NWYKLDFMVVIVLCLSLIGKTR) form a helical membrane-spanning segment. A topological domain (extracellular) is located at residue Glu-1020. Residues 1021–1039 (DLNPLASIKFLRALRVLSQ) traverse the membrane as a helical segment. Topologically, residues 1040–1054 (FERMKVVLRALIKTT) are cytoplasmic. Residues 1055–1079 (LPAVSVFLVCLMIWLLFSVMGVFLF) form a helical membrane-spanning segment. At 1080–1126 (AGKFYECIDPTRGERFSVFEVMNKSQCENLVFNESMPWENAKLNFDN) the chain is on the extracellular side. A disulfide bridge connects residues Cys-1086 and Cys-1106. 2 N-linked (GlcNAc...) asparagine glycosylation sites follow: Asn-1102 and Asn-1112. The segment at residues 1127 to 1153 (VGNGFLSLFQVATFNGWISIMNSAIDS) is an intramembrane region (pore-forming). The Extracellular segment spans residues 1154–1166 (VGVYMQPSFEHSL). Residues 1167–1201 (HMYTYFIIFVVFGLFLPLCMLIGVIIRNFNKQKIK) form a helical membrane-spanning segment. Residues 1202–1249 (QGGSNIFITVKQKKQYRALKKLLYADSQKPAARPRNKFQGFICDVVTH) lie on the Cytoplasmic side of the membrane. Residues 1232-1530 (AARPRNKFQG…WNRFDPDRTQ (299 aa)) form an IV repeat. A helical membrane pass occupies residues 1250 to 1271 (RVFNVIIILLICFQATTIMIQN). Residues 1272–1275 (DEQS) are Extracellular-facing. A helical transmembrane segment spans residues 1276–1304 (PQIETAVFWMNSLFTMLFTLECILKLTAF). Residues 1305–1311 (RCHYFTS) are Cytoplasmic-facing. Residues 1312-1337 (AWNVHDFMVVVFSITGLLLPLSIGQY) form a helical membrane-spanning segment. Topologically, residues 1338–1340 (FVP) are extracellular. Residues 1341–1361 (PSLVQLLLLSRIIHVLRPGKG) traverse the membrane as a helical segment. Over 1362–1376 (PKVFHDLMLPLMLSL) the chain is Cytoplasmic. A helical membrane pass occupies residues 1377–1401 (PALLNIALLIFLVMFIYAIFGMYNF). Topologically, residues 1402–1419 (AYVKKEAGINDVSNFETF) are extracellular. Residues 1420 to 1443 (GSSMLCLFQVTTFSGWDGMLDAIF) constitute an intramembrane region (pore-forming). Residues 1444-1467 (NSQWSDCDPDKINPGTQVRGDCGS) lie on the Extracellular side of the membrane. An intrachain disulfide couples Cys-1450 to Cys-1465. The chain crosses the membrane as a helical span at residues 1468–1503 (PSVGIFYFVSYILISWLIIVNMYVVLIMEFLSIPSK). The Cytoplasmic portion of the chain corresponds to 1504–1680 (RKNRTLSEDD…EEKASIQTQI (177 aa)). Residues 1646–1680 (KIQDIPEIDDGREDPNSKGVHSGQIEEKASIQTQI) are disordered.

The protein belongs to the sodium channel (TC 1.A.1.10) family. SCN7A subfamily. In terms of assembly, the sodium channel formed by SCN7A is probably a heterooligomeric complex consisting of the ion conducting pore forming alpha subunit SCN7A and regulatory beta subunits such as SCN3B. Interacts with ATP1A1; activates ATP1A1 and thereby indirectly signals to nearby neurons to regulate sodium homeostasis. As to expression, not tissue specific but widely expressed.

The protein localises to the cell membrane. It catalyses the reaction Na(+)(in) = Na(+)(out). Its function is as follows. Sodium leak channel functioning as an osmosensor regulating sodium ion levels in various tissues and organs. While most sodium channels are voltage-gated, SCN7A is not and lets sodium flow through membrane along its concentration gradient. In glial cells of the central nervous system, senses body-fluid sodium levels and controls salt intake behavior as well as voluntary water intake through activation of nearby neurons to maintain appropriate sodium levels in the body. By mediating sodium influx into keratinocytes, also plays a role in skin barrier homeostasis. This chain is Sodium channel protein type 7 subunit alpha, found in Rattus norvegicus (Rat).